A 618-amino-acid chain; its full sequence is Leucine aminopeptidase 2 (618 aa).

A peptide contacts are provided by residues Gln-139–Gln-141 and Pro-271–Glu-276. Position 300 (His-300) interacts with Zn(2+). Glu-301 (proton acceptor) is an active-site residue. Zn(2+) is bound by residues His-304 and Glu-323. Residue Tyr-389 is the Proton donor of the active site.

Belongs to the peptidase M1 family. The cofactor is Zn(2+).

The protein resides in the cytoplasm. The protein localises to the nucleus. It carries out the reaction an epoxide + H2O = an ethanediol. Aminopeptidase that preferentially cleaves di- and tripeptides. Also has low epoxide hydrolase activity (in vitro). Can hydrolyze the epoxide leukotriene LTA(4) but it forms preferentially 5,6-dihydroxy-7,9,11,14-eicosatetraenoic acid rather than the cytokine leukotriene B(4) as the product compared to the homologous mammalian enzyme (in vitro). The chain is Leucine aminopeptidase 2 from Aspergillus clavatus (strain ATCC 1007 / CBS 513.65 / DSM 816 / NCTC 3887 / NRRL 1 / QM 1276 / 107).